Here is a 247-residue protein sequence, read N- to C-terminus: T-cell surface glycoprotein CD8 alpha chain (247 aa).

Residues 1–27 form the signal peptide; the sequence is MASPLTRFLSLNLLLLGESIILGSGEA. One can recognise an Ig-like V-type domain in the interval 28 to 139; sequence KPQAPELRIF…SVISNSVMYF (112 aa). Residues 28–196 lie on the Extracellular side of the membrane; it reads KPQAPELRIF…TGLDFACDIY (169 aa). A disulfide bridge connects residues cysteine 53 and cysteine 129. N-linked (GlcNAc...) asparagine glycans are attached at residues asparagine 69, asparagine 97, and asparagine 150. Residues 156–182 are disordered; sequence PVLRTPSPVHPTGTSQPQRPEDCRPRG. The helical transmembrane segment at 197 to 217 threads the bilayer; that stretch reads IWAPLAGICVALLLSLIITLI. The Cytoplasmic portion of the chain corresponds to 218 to 247; that stretch reads CYHRSRKRVCKCPRPLVRQEGKPRPSEKIV.

Forms disulfide-linked heterodimers with CD8B at the cell surface. Also forms homodimers in several cell types including NK-cells or peripheral blood T-lymphocytes. Interacts with the MHC class I HLA-A/B2M dimer. Interacts with LCK in a zinc-dependent manner. In terms of processing, palmitoylated, but association with CD8B seems to be more important for the enrichment of CdD8A in lipid rafts. Post-translationally, phosphorylated in cytotoxic T-lymphocytes (CTLs) following activation.

It is found in the cell membrane. In terms of biological role, integral membrane glycoprotein that plays an essential role in the immune response and serves multiple functions in responses against both external and internal offenses. In T-cells, functions primarily as a coreceptor for MHC class I molecule:peptide complex. The antigens presented by class I peptides are derived from cytosolic proteins while class II derived from extracellular proteins. Interacts simultaneously with the T-cell receptor (TCR) and the MHC class I proteins presented by antigen presenting cells (APCs). In turn, recruits the Src kinase LCK to the vicinity of the TCR-CD3 complex. LCK then initiates different intracellular signaling pathways by phosphorylating various substrates ultimately leading to lymphokine production, motility, adhesion and activation of cytotoxic T-lymphocytes (CTLs). This mechanism enables CTLs to recognize and eliminate infected cells and tumor cells. In NK-cells, the presence of CD8A homodimers at the cell surface provides a survival mechanism allowing conjugation and lysis of multiple target cells. CD8A homodimer molecules also promote the survival and differentiation of activated lymphocytes into memory CD8 T-cells. The polypeptide is T-cell surface glycoprotein CD8 alpha chain (Cd8a) (Mus musculus (Mouse)).